Here is a 94-residue protein sequence, read N- to C-terminus: Pyrimidine/purine nucleoside phosphorylase (94 aa).

Belongs to the nucleoside phosphorylase PpnP family.

It carries out the reaction a purine D-ribonucleoside + phosphate = a purine nucleobase + alpha-D-ribose 1-phosphate. It catalyses the reaction adenosine + phosphate = alpha-D-ribose 1-phosphate + adenine. The catalysed reaction is cytidine + phosphate = cytosine + alpha-D-ribose 1-phosphate. The enzyme catalyses guanosine + phosphate = alpha-D-ribose 1-phosphate + guanine. It carries out the reaction inosine + phosphate = alpha-D-ribose 1-phosphate + hypoxanthine. It catalyses the reaction thymidine + phosphate = 2-deoxy-alpha-D-ribose 1-phosphate + thymine. The catalysed reaction is uridine + phosphate = alpha-D-ribose 1-phosphate + uracil. The enzyme catalyses xanthosine + phosphate = alpha-D-ribose 1-phosphate + xanthine. Functionally, catalyzes the phosphorolysis of diverse nucleosides, yielding D-ribose 1-phosphate and the respective free bases. Can use uridine, adenosine, guanosine, cytidine, thymidine, inosine and xanthosine as substrates. Also catalyzes the reverse reactions. The sequence is that of Pyrimidine/purine nucleoside phosphorylase from Salmonella paratyphi C (strain RKS4594).